The following is a 292-amino-acid chain: NAD kinase (292 aa).

The active-site Proton acceptor is Asp-73. Residues 73-74 (DG), 147-148 (NE), His-158, Arg-175, Asp-177, 188-193 (TAYSLS), and Gln-247 each bind NAD(+).

The protein belongs to the NAD kinase family. A divalent metal cation is required as a cofactor.

The protein localises to the cytoplasm. It carries out the reaction NAD(+) + ATP = ADP + NADP(+) + H(+). Its function is as follows. Involved in the regulation of the intracellular balance of NAD and NADP, and is a key enzyme in the biosynthesis of NADP. Catalyzes specifically the phosphorylation on 2'-hydroxyl of the adenosine moiety of NAD to yield NADP. The polypeptide is NAD kinase (Serratia proteamaculans (strain 568)).